The following is a 288-amino-acid chain: Stress response protein YhaX (288 aa).

The sequence is that of Stress response protein YhaX (yhaX) from Bacillus subtilis (strain 168).